The sequence spans 399 residues: Transcription termination factor 1, mitochondrial (399 aa).

A mitochondrion-targeting transit peptide spans 1 to 57 (MQSLSLGQTSISKGLNYLTIMAPGNLWHMRNNFLFGSRCWMTRFSAENIFKSVSFRL). Interaction with DNA regions lie at residues 169–170 (RS), 247–251 (QSTKR), 324–331 (AEKKFNDK), 355–358 (SIST), and 384–391 (SKKRYEAK).

The protein belongs to the mTERF family. As to quaternary structure, monomer. In terms of processing, phosphoprotein with mostly four phosphate groups. While the DNA-binding activity is unaffected by the phosphorylation state, only the phosphorylated form of the protein is active for termination activity. Functioning seems to be regulated by phosphorylation.

The protein localises to the mitochondrion. In terms of biological role, transcription termination factor. Binds to a 28 bp region within the tRNA(Leu(uur)) gene at a position immediately adjacent to and downstream of the 16S rRNA gene; this region comprises a tridecamer sequence critical for directing accurate termination. Binds DNA along the major grove and promotes DNA bending and partial unwinding. Promotes base flipping. Transcription termination activity appears to be polarized with highest specificity for transcripts initiated on the light strand. This Homo sapiens (Human) protein is Transcription termination factor 1, mitochondrial (MTERF1).